A 354-amino-acid chain; its full sequence is Uroporphyrinogen decarboxylase (354 aa).

Residues 27 to 31 (RQAGR), Asp-77, Tyr-154, Ser-209, and His-327 contribute to the substrate site.

The protein belongs to the uroporphyrinogen decarboxylase family. As to quaternary structure, homodimer.

Its subcellular location is the cytoplasm. It carries out the reaction uroporphyrinogen III + 4 H(+) = coproporphyrinogen III + 4 CO2. Its pathway is porphyrin-containing compound metabolism; protoporphyrin-IX biosynthesis; coproporphyrinogen-III from 5-aminolevulinate: step 4/4. Its function is as follows. Catalyzes the decarboxylation of four acetate groups of uroporphyrinogen-III to yield coproporphyrinogen-III. In Shewanella piezotolerans (strain WP3 / JCM 13877), this protein is Uroporphyrinogen decarboxylase.